The primary structure comprises 120 residues: Large ribosomal subunit protein uL18 (120 aa).

Belongs to the universal ribosomal protein uL18 family. In terms of assembly, part of the 50S ribosomal subunit; part of the 5S rRNA/L5/L18/L25 subcomplex. Contacts the 5S and 23S rRNAs.

Its function is as follows. This is one of the proteins that bind and probably mediate the attachment of the 5S RNA into the large ribosomal subunit, where it forms part of the central protuberance. This chain is Large ribosomal subunit protein uL18, found in Bordetella bronchiseptica (strain ATCC BAA-588 / NCTC 13252 / RB50) (Alcaligenes bronchisepticus).